Here is a 175-residue protein sequence, read N- to C-terminus: MLKVSARHAPVLRLPRRFYAQKTRVVIGPRLKNLDEIKEYLGKPTWSVEKYLQSSSNGETQPPSRETVEKLLKLSGLPNENVEMFQATLGKQLAFINKVQSLPVDESLDPSHARIIDRNSEALDYESLSCSVEQQETEKDSKMGEVGGSWDGTGLAAISENGFYVLREGLLKNRK.

The N-terminal 19 residues, 1–19, are a transit peptide targeting the mitochondrion; that stretch reads MLKVSARHAPVLRLPRRFY.

The protein belongs to the GatF family. In terms of assembly, subunit of the heterotrimeric GatFAB amidotransferase (AdT) complex, composed of A, B and F subunits.

The protein localises to the mitochondrion inner membrane. It carries out the reaction L-glutamyl-tRNA(Gln) + L-glutamine + ATP + H2O = L-glutaminyl-tRNA(Gln) + L-glutamate + ADP + phosphate + H(+). Its function is as follows. Allows the formation of correctly charged Gln-tRNA(Gln) through the transamidation of misacylated Glu-tRNA(Gln) in the mitochondria. The reaction takes place in the presence of glutamine and ATP through an activated gamma-phospho-Glu-tRNA(Gln). Required for proper protein synthesis within the mitochondrion. The polypeptide is Glutamyl-tRNA(Gln) amidotransferase subunit F, mitochondrial (Lachancea thermotolerans (strain ATCC 56472 / CBS 6340 / NRRL Y-8284) (Yeast)).